Here is a 287-residue protein sequence, read N- to C-terminus: Protoheme IX farnesyltransferase (287 aa).

8 helical membrane passes run 9 to 29, 31 to 51, 94 to 114, 132 to 152, 158 to 178, 202 to 222, 228 to 248, and 267 to 287; these read IVTMILVTTVASALIAGSATL, LIDWFWLMIGTALIAGSAGAA, IILWLGNGLVPACVGIATWLI, VGAIAGALPVFIGYTAAGGTL, WMLFGVLACWQYPHFMAIAWL, AWQSILGSVALATCGVVLAWF, VASAASVLATVLILAASWPLL, and LRWSLVVLPAVLLVMTLRASL.

The protein belongs to the UbiA prenyltransferase family. Protoheme IX farnesyltransferase subfamily.

The protein resides in the cell inner membrane. It catalyses the reaction heme b + (2E,6E)-farnesyl diphosphate + H2O = Fe(II)-heme o + diphosphate. It participates in porphyrin-containing compound metabolism; heme O biosynthesis; heme O from protoheme: step 1/1. In terms of biological role, converts heme B (protoheme IX) to heme O by substitution of the vinyl group on carbon 2 of heme B porphyrin ring with a hydroxyethyl farnesyl side group. In Rhodopirellula baltica (strain DSM 10527 / NCIMB 13988 / SH1), this protein is Protoheme IX farnesyltransferase.